Consider the following 242-residue polypeptide: NLP effector protein 8 (242 aa).

A signal peptide spans 1–17 (MHLTVFYLVALCTFASA). Residues 108-118 (AIMYAWYFPRD) carry the Conserved undecapeptide motif motif. The short motif at 127–133 (GHRNAWE) is the Conserved heptapeptide motif element. Asn-206 carries N-linked (GlcNAc...) asparagine glycosylation.

Belongs to the Necrosis inducing protein (NPP1) family.

Its subcellular location is the secreted. Probable secreted effector that may act as a pathogen-associated molecular pattern (PAMP) recognized by the plant immune system. The sequence is that of NLP effector protein 8 from Plasmopara viticola (Downy mildew of grapevine).